The primary structure comprises 455 residues: Serine--tRNA ligase (455 aa).

252-254 serves as a coordination point for L-serine; that stretch reads TAE. ATP contacts are provided by residues 283–285 and valine 299; that span reads RKE. Glutamate 306 is an L-serine binding site. Position 370–373 (370–373) interacts with ATP; sequence EVVS. Threonine 406 serves as a coordination point for L-serine.

The protein belongs to the class-II aminoacyl-tRNA synthetase family. Type-1 seryl-tRNA synthetase subfamily. As to quaternary structure, homodimer. The tRNA molecule binds across the dimer.

It localises to the cytoplasm. It catalyses the reaction tRNA(Ser) + L-serine + ATP = L-seryl-tRNA(Ser) + AMP + diphosphate + H(+). It carries out the reaction tRNA(Sec) + L-serine + ATP = L-seryl-tRNA(Sec) + AMP + diphosphate + H(+). It functions in the pathway aminoacyl-tRNA biosynthesis; selenocysteinyl-tRNA(Sec) biosynthesis; L-seryl-tRNA(Sec) from L-serine and tRNA(Sec): step 1/1. Functionally, catalyzes the attachment of serine to tRNA(Ser). Is also able to aminoacylate tRNA(Sec) with serine, to form the misacylated tRNA L-seryl-tRNA(Sec), which will be further converted into selenocysteinyl-tRNA(Sec). The sequence is that of Serine--tRNA ligase from Thermococcus kodakarensis (strain ATCC BAA-918 / JCM 12380 / KOD1) (Pyrococcus kodakaraensis (strain KOD1)).